Reading from the N-terminus, the 396-residue chain is Probable sugar efflux transporter (396 aa).

12 consecutive transmembrane segments (helical) span residues 15 to 35 (VVTLAVAAFIFNTTEFVPVGL), 50 to 70 (VGIMLTIYAWVVALMSLPFML), 81 to 101 (LICLFVVFIASHVLSFLSWSF), 103 to 123 (VLVISRIGVAFAHAIFWSITA), 136 to 156 (AQALSLIATGTALAMVLGLPL), 170 to 190 (FFAIGIGALITLLCLIKLLPL), 209 to 229 (PALMSIYLLTVVVVTAHYTAY), 246 to 266 (FATALLLLLGGAGIIGSVIFG), 275 to 295 (ALVSTAIALLLVCLALLLPAA), 299 to 319 (IHLGVLSIFWGIAMMIIGLGM), 333 to 353 (VAMALFSGIFNIGIGAGALVG), and 364 to 384 (MIGYVGAVPAFAALIWSIIIF).

The protein belongs to the major facilitator superfamily. SotB (TC 2.A.1.2) family.

The protein localises to the cell inner membrane. In terms of biological role, involved in the efflux of sugars. The physiological role may be the reduction of the intracellular concentration of toxic sugars or sugar metabolites. This chain is Probable sugar efflux transporter, found in Escherichia coli O139:H28 (strain E24377A / ETEC).